Consider the following 107-residue polypeptide: Pro-corazonin (107 aa).

The N-terminal stretch at Met1–Cys21 is a signal peptide. Residue Gln22 is modified to Pyrrolidone carboxylic acid. Asn32 is subject to Asparagine amide. Positions Ser88 to Tyr107 are excised as a propeptide.

This sequence belongs to the corazonin family. In the adult brain, expressed in four neurons of the lateral protocerebrum project axons towards the retrocerebral complex.

It localises to the secreted. Its function is as follows. Cardioactive peptide. Corazonin is probably involved in the physiological regulation of the heart beat. In Apis mellifera (Honeybee), this protein is Pro-corazonin.